We begin with the raw amino-acid sequence, 218 residues long: Sodium channel regulatory subunit beta-1 (218 aa).

Positions 1–18 (MGTLLAFVVGAALVSSAW) are cleaved as a signal peptide. The Extracellular segment spans residues 19-157 (GGCVEVDSET…DKANRDMASI (139 aa)). Disulfide bonds link cysteine 21/cysteine 43 and cysteine 40/cysteine 121. In terms of domain architecture, Ig-like C2-type spans 22 to 150 (VEVDSETEAV…KIHLEVVDKA (129 aa)). 4 N-linked (GlcNAc...) asparagine glycosylation sites follow: asparagine 93, asparagine 110, asparagine 114, and asparagine 135. Residues 158-179 (VSEIMMYVLIVVLTIWLVAEMV) traverse the membrane as a helical segment. Topologically, residues 180–218 (YCYKKIAAATEAAAQENASEYLAITSESKENCTGVQVAE) are cytoplasmic.

Belongs to the sodium channel auxiliary subunit SCN1B (TC 8.A.17) family. In terms of assembly, a voltage-gated sodium (Nav) channel consists of an ion-conducting pore-forming alpha subunit functional on its own that is regulated by one or more beta subunits. Interacts with SCN1A; regulatory subunit of SCN1A/Nav1.1. Interacts with SCN3A; regulatory subunit of SCN3A/Nav1.3. Interacts with SCN4A; regulatory subunit of SCN4A/Nav1.4. Interacts with SCN5A; regulatory subunit of SCN5A/Nav1.5. Interacts with SCN8A; regulatory subunit of SCN8A/Nav1.6. Interacts with SCN9A; regulatory subunit of SCN9A/Nav1.7. Interacts with SCN10A; regulatory subunit of SCN10A/Nav1.8. Interacts with NFASC. Interacts with TMEM65.

Its subcellular location is the cell membrane. It localises to the perikaryon. The protein resides in the cell projection. The protein localises to the axon. Regulatory subunit of multiple voltage-gated sodium (Nav) channels directly mediating the depolarization of excitable membranes. Navs, also called VGSCs (voltage-gated sodium channels) or VDSCs (voltage-dependent sodium channels), operate by switching between closed and open conformations depending on the voltage difference across the membrane. In the open conformation they allow Na(+) ions to selectively pass through the pore, along their electrochemical gradient. The influx of Na+ ions provokes membrane depolarization, initiating the propagation of electrical signals throughout cells and tissues. The accessory beta subunits participate in localization and functional modulation of the Nav channels. Modulates the activity of SCN1A/Nav1.1, SCN2A/Nav1.2, SCN3A/Nav1.3, SCN4A/Nav1.4, SCN5A/Nav1.5, SCN8A/Nav1.6, SCN9A/Nav1.7 and SCN10A/Nav1.8. This Bos taurus (Bovine) protein is Sodium channel regulatory subunit beta-1.